Reading from the N-terminus, the 297-residue chain is UBX domain-containing protein 1 (297 aa).

Alanine 2 is subject to N-acetylalanine. In terms of domain architecture, UBA spans 2-42; that stretch reads AELTALESLIEMGFPRGRAEKALALTGNQGIEAAMDWLMEH. The segment at 38–212 is disordered; sequence WLMEHEDDPD…QEPPTKREYD (175 aa). Residues 42 to 52 are compositionally biased toward acidic residues; the sequence is HEDDPDVDEPL. The interval 43 to 297 is interaction with BRCA1; it reads EDDPDVDEPL…VLIVAKKCPS (255 aa). Composition is skewed to basic and acidic residues over residues 86–122 and 137–177; these read LTEE…EREK and KLQE…ERAQ. Positions 86–172 form a coiled coil; it reads LTEEERQEQT…RVREKIERDK (87 aa). The residue at position 199 (serine 199) is a Phosphoserine. Serine 200 carries the phosphoserine; by MAPK12 modification. 2 positions are modified to phosphothreonine: threonine 207 and threonine 229. Positions 209 to 291 constitute a UBX domain; that stretch reads REYDQCRIQV…GLVPSAVLIV (83 aa). Serine 270 is modified (phosphoserine).

Component of a complex required to couple retrotranslocation, ubiquitination and deglycosylation composed of NGLY1, SAKS1, AMFR, VCP and RAD23B. Interacts with HOMER2. Interacts directly with VCP. Interacts with BRCA1 and BARD1; interaction takes place when BRCA1 is not autoubiquitinated bur is strongly enhanced in the presence of autoubiquitinated BRCA1.

The protein resides in the cytoplasm. Ubiquitin-binding protein that interacts with the BRCA1-BARD1 heterodimer, and regulates its activity. Specifically binds 'Lys-6'-linked polyubiquitin chains. Interaction with autoubiquitinated BRCA1, leads to inhibit the E3 ubiquitin-protein ligase activity of the BRCA1-BARD1 heterodimer. Component of a complex required to couple deglycosylation and proteasome-mediated degradation of misfolded proteins in the endoplasmic reticulum that are retrotranslocated in the cytosol. The polypeptide is UBX domain-containing protein 1 (Ubxn1) (Rattus norvegicus (Rat)).